Here is a 347-residue protein sequence, read N- to C-terminus: MKNSKAILQVPGTMKIISAEIPVPKEDEVLIKVEYVGICGSDVHGFESGPFIPPKDPNQEIGLGHECAGTVVAVGSRVRKFKPGDRVNIEPGVPCGHCRYCLEGKYNICPDVDFMATQPNYRGALTHYLCHPESFTYKLPDNMDTMEGALVEPAAVGMHAAMLADVKPGKKIIILGAGCIGLMTLQACKCLGATEIAVVDVLEKRLAMAEQLGATVVINGAKEDTIARCQQFTEDMGADIVFETAGSAVTVKQAPYLVMRGGKIMIVGTVPGDSAINFLKINREVTIQTVFRYANRYPVTIEAISSGRFDVKSMVTHIYDYRDVQQAFEESVNNKRDIIKGVIKISD.

Residues Cys-39, His-65, Cys-95, Cys-98, Cys-101, Cys-109, and Glu-152 each contribute to the Zn(2+) site.

Belongs to the zinc-containing alcohol dehydrogenase family. Zn(2+) is required as a cofactor.

This is an uncharacterized protein from Escherichia coli (strain K12).